Consider the following 354-residue polypeptide: uncharacterized protein (354 aa).

Residues 309–326 (VNSANSINTANTRSQTGG) show a composition bias toward polar residues. The interval 309-333 (VNSANSINTANTRSQTGGQDEEDFE) is disordered. Positions 326–353 (GQDEEDFEKKYKKYKNKYAKLKNQKTSN) form a coiled coil.

The protein resides in the virion. This is an uncharacterized protein from Acanthamoeba polyphaga (Amoeba).